Reading from the N-terminus, the 1073-residue chain is Probable nuclear hormone receptor HR38 (1073 aa).

Disordered regions lie at residues 55–87 (NLNA…LPPP), 150–185 (TPAP…SNCD), 263–326 (TQTA…LVSP), 437–458 (ALHA…QQHQ), 492–514 (KYNS…APTP), 529–579 (PPLS…NSGG), and 618–640 (GQQQ…NGER). Composition is skewed to low complexity over residues 59–82 (PTHQ…QQHP), 175–185 (DSNSDSNSNCD), and 263–277 (TQTA…ASAA). The span at 279–291 (HHQHHNHLLHQQH) shows a compositional bias: basic residues. 3 stretches are compositionally biased toward low complexity: residues 292-326 (HNQQ…LVSP), 441-458 (QQQQ…QQHQ), and 495-514 (SSSG…APTP). Residues 619 to 636 (QQQQQQQQSYQQHNYNSH) show a composition bias toward low complexity. The nuclear receptor DNA-binding region spans 741–816 (SQLCAVCGDT…VGMVKEVVRT (76 aa)). 2 consecutive NR C4-type zinc fingers follow at residues 744 to 764 (CAVC…CEGC) and 780 to 804 (CLAD…FQKC). A disordered region spans residues 819-841 (LKGRRGRLPSKPKSPQESPPSPP). In terms of domain architecture, NR LBD spans 840–1070 (PPISLITALV…ALIENMFVTT (231 aa)).

Belongs to the nuclear hormone receptor family. NR4 subfamily. In terms of assembly, forms a heterodimer with USP. Ubiquitously expressed in preblastoderm embryos, specifically in central nervous system and intestinal tract. Highly expressed in third instar larval imaginal disks and brain complexes, but not in ovaries.

The protein localises to the nucleus. Functionally, binds to NGFI-B response elements. Plays an important role in late stages of epidermal metamorphosis. The protein is Probable nuclear hormone receptor HR38 (Hr38) of Drosophila melanogaster (Fruit fly).